Here is a 355-residue protein sequence, read N- to C-terminus: Elongation factor Ts (355 aa).

An involved in Mg(2+) ion dislocation from EF-Tu region spans residues Thr82–Val85.

This sequence belongs to the EF-Ts family.

It is found in the cytoplasm. Its function is as follows. Associates with the EF-Tu.GDP complex and induces the exchange of GDP to GTP. It remains bound to the aminoacyl-tRNA.EF-Tu.GTP complex up to the GTP hydrolysis stage on the ribosome. The sequence is that of Elongation factor Ts from Wolinella succinogenes (strain ATCC 29543 / DSM 1740 / CCUG 13145 / JCM 31913 / LMG 7466 / NCTC 11488 / FDC 602W) (Vibrio succinogenes).